The chain runs to 395 residues: Glyceraldehyde-3-phosphate dehydrogenase, testis-specific (395 aa).

Positions 1–60 are testis-specific N-terminal extension; it reads MSKRDIVLTNVTVVQLLRQPCPEPRVEAEPEPPAQPQPQPEPIKEEVPPPPPPPPAPKKV. The segment at 19–59 is disordered; it reads QPCPEPRVEAEPEPPAQPQPQPEPIKEEVPPPPPPPPAPKK. Composition is skewed to pro residues over residues 31 to 41 and 48 to 57; these read EPPAQPQPQPE and PPPPPPPPAP. Residues 72-73, Asp93, and Lys138 each bind NAD(+); that span reads RI. Residues 210-212, Thr241, 270-271, and Arg293 contribute to the D-glyceraldehyde 3-phosphate site; these read SCT and TG. Cys211 serves as the catalytic Nucleophile. Asn375 contributes to the NAD(+) binding site.

It belongs to the glyceraldehyde-3-phosphate dehydrogenase family. In terms of assembly, homotetramer.

Its subcellular location is the cytoplasm. It catalyses the reaction D-glyceraldehyde 3-phosphate + phosphate + NAD(+) = (2R)-3-phospho-glyceroyl phosphate + NADH + H(+). It participates in carbohydrate degradation; glycolysis; pyruvate from D-glyceraldehyde 3-phosphate: step 1/5. May play an important role in regulating the switch between different pathways for energy production during spermiogenesis and in the spermatozoon. Required for sperm motility and male fertility. This chain is Glyceraldehyde-3-phosphate dehydrogenase, testis-specific (GAPDHS), found in Bos taurus (Bovine).